The primary structure comprises 195 residues: Myelin-associated neurite-outgrowth inhibitor (195 aa).

Met1 is modified (N-acetylmethionine). Over 1–18 (MNPVYSPGSSGVPYANAK) the chain is Cytoplasmic. Ser6 is subject to Phosphoserine. A helical transmembrane segment spans residues 19–42 (GIGYPAGFPMGYAAAAPAYSPNMY). Residues 43 to 142 (PGANPTFQTG…PAPIPPPRGN (100 aa)) are Extracellular-facing. A glycan (N-linked (GlcNAc...) asparagine) is linked at Asn46. Residues 143–164 (GVTMGMVAGTTMAMSAGTLLTA) form a helical membrane-spanning segment. The Cytoplasmic portion of the chain corresponds to 165–195 (HSPTPVAPHPVTVPTYRAPGTPTYSYVPPQW).

The protein belongs to the FAM168 family. In terms of assembly, may form homodimers. May interact with DAZAP2, FAM168A, PRDX6, RBM6, TMTC1 and YPEL2. Interacts with CDC27. Post-translationally, N-glycosylated. In terms of tissue distribution, expressed in the brain, within neuronal axonal fibers and associated with myelin sheets (at protein level). Expression tends to be lower in the brain of Alzheimer disease patients compared to healthy individuals (at protein level).

Its subcellular location is the cytoplasm. The protein resides in the perinuclear region. The protein localises to the cell membrane. It localises to the cell projection. It is found in the axon. Its function is as follows. Inhibitor of neuronal axonal outgrowth. Acts as a negative regulator of CDC42 and STAT3 and a positive regulator of STMN2. Positive regulator of CDC27. This chain is Myelin-associated neurite-outgrowth inhibitor (FAM168B), found in Homo sapiens (Human).